A 236-amino-acid polypeptide reads, in one-letter code: Orotidine 5'-phosphate decarboxylase (236 aa).

Substrate contacts are provided by residues Asp-16, Lys-38, 65 to 74, Thr-123, Arg-184, Gln-193, Gly-213, and Arg-214; that span reads DLKLHDIGNT. The active-site Proton donor is the Lys-67.

This sequence belongs to the OMP decarboxylase family. Type 1 subfamily. Homodimer.

It carries out the reaction orotidine 5'-phosphate + H(+) = UMP + CO2. Its pathway is pyrimidine metabolism; UMP biosynthesis via de novo pathway; UMP from orotate: step 2/2. Catalyzes the decarboxylation of orotidine 5'-monophosphate (OMP) to uridine 5'-monophosphate (UMP). The chain is Orotidine 5'-phosphate decarboxylase from Methylobacterium nodulans (strain LMG 21967 / CNCM I-2342 / ORS 2060).